The sequence spans 318 residues: uncharacterized protein (318 aa).

To A.aeolicus AA07 and AA34.

This is an uncharacterized protein from Aquifex aeolicus (strain VF5).